The chain runs to 641 residues: AEKIKICLQKQVNSSFSLHNGFGGNLYATEEKRMFELVKPKAGASVLNQSTWIGFGDSRTDKSNPNFPRSADVSVKTANKFRSLTGGSLMLSMFGPPGKVDYLYQGCGKHKVFYEGVNWSPHAAIDCYRKNWTDIKLNFQKNIYELASQSHCMSLVNALDKTIPLQATAGVAGNCNNSFLKNPALYTQEVTPPEKCGKENLAFFTLPTQFGTYECKLHLVASCYFIYDSKEVYNKRGCDNYFQVIYDSSGKVVGGLDNRVSPYTGNTGDTPTMQCDMLQLKPGRYSVRSSPRFLLMPERSYCFDMKEKGLVTAVQSIWGKDRKSDYAVDQACLSTPGCMLIQKQKPYTGEADDHHGDQEMRELLSGLDYEARCISQSGWVNETSPFTEEYLLPPKFGRCPLAAKEESIPKIPDGLLIPTSGTDTTVTKPKSRIFGIDDLIIGLLFVAIVEAGIGGYLLGSRKESGGGVTKESAEKGFEKIGNDIQILRSSTNIAIEKLNDRITHDEQAIRDLTLEIENARSEALLGELGIIRALLVGNISIGLQESLWELASEITNRAGDLAVEISPGCWIIDNNICDQSCQNFIFKFNETAPVPTIPPLDTKIDLQSDPFYWGSSLGLAITTPISLAALVISGIAICRTK.

A1 is a signal peptide. A fusion domain-1 region spans residues 2–27; the sequence is EKIKICLQKQVNSSFSLHNGFGGNLY. Topologically, residues 2–616 are extracellular; that stretch reads EKIKICLQKQ…QSDPFYWGSS (615 aa). Disulfide bonds link C7–C569, C107–C152, C127–C175, C196–C238, C215–C302, C223–C275, and C332–C338. 2 N-linked (GlcNAc...) asparagine; by host glycosylation sites follow: N13 and N48. The segment at 28-138 is esterase domain-1; that stretch reads ATEEKRMFEL…RKNWTDIKLN (111 aa). S58 serves as the catalytic Nucleophile. N131 is a glycosylation site (N-linked (GlcNAc...) asparagine; by host). An N-acetyl-9-O-acetylneuraminic acid binding region spans residues 138–296; sequence NFQKNIYELA…VRSSPRFLLM (159 aa). The tract at residues 297-351 is esterase domain-2; it reads PERSYCFDMKEKGLVTAVQSIWGKDRKSDYAVDQACLSTPGCMLIQKQKPYTGEA. Residues D352 and H355 each act as charge relay system in the active site. Residues 352–637 form a fusion domain-2 region; that stretch reads DDHHGDQEMR…AALVISGIAI (286 aa). N381 carries N-linked (GlcNAc...) asparagine; by host glycosylation. Residues 617–637 traverse the membrane as a helical segment; sequence LGLAITTPISLAALVISGIAI. Residues 638–641 are Cytoplasmic-facing; it reads CRTK.

The protein belongs to the influenza type C/coronaviruses hemagglutinin-esterase family. Homotrimer of disulfide-linked HEF1-HEF2. In natural infection, inactive HEF is matured into HEF1 and HEF2 outside the cell by one or more trypsin-like, arginine-specific endoprotease.

It localises to the virion membrane. It is found in the host cell membrane. It catalyses the reaction N-acetyl-9-O-acetylneuraminate + H2O = N-acetylneuraminate + acetate + H(+). The enzyme catalyses N-acetyl-4-O-acetylneuraminate + H2O = N-acetylneuraminate + acetate + H(+). In terms of biological role, binds to the N-acetyl-9-O-acetylneuraminic acid residues on the cell surface, bringing about the attachment of the virus particle to the cell. Plays a major role in the determination of host range restriction and virulence. Class I viral fusion protein. Responsible for penetration of the virus into the cell cytoplasm by mediating the fusion of the membrane of the endocytosed virus particle with the endosomal membrane. Low pH in endosomes induce an irreversible conformational change in HEF2, releasing the fusion hydrophobic peptide. Several trimers are required to form a competent fusion pore. Displays a receptor-destroying activity which is a neuraminidate-O-acetyl esterase. This activity cleaves off any receptor on the cell surface, which would otherwise prevent virions release. These cleavages prevent self-aggregation and ensure the efficient spread of the progeny virus from cell to cell. This chain is Hemagglutinin-esterase-fusion glycoprotein (HE), found in Homo sapiens (Human).